The primary structure comprises 325 residues: Tetraacyldisaccharide 4'-kinase (325 aa).

ATP is bound at residue 55–62; sequence TAGGNGKT.

This sequence belongs to the LpxK family.

The enzyme catalyses a lipid A disaccharide + ATP = a lipid IVA + ADP + H(+). It functions in the pathway glycolipid biosynthesis; lipid IV(A) biosynthesis; lipid IV(A) from (3R)-3-hydroxytetradecanoyl-[acyl-carrier-protein] and UDP-N-acetyl-alpha-D-glucosamine: step 6/6. Its function is as follows. Transfers the gamma-phosphate of ATP to the 4'-position of a tetraacyldisaccharide 1-phosphate intermediate (termed DS-1-P) to form tetraacyldisaccharide 1,4'-bis-phosphate (lipid IVA). This chain is Tetraacyldisaccharide 4'-kinase, found in Salmonella heidelberg (strain SL476).